The primary structure comprises 205 residues: Holliday junction branch migration complex subunit RuvA (205 aa).

A domain I region spans residues 1-64; sequence MIGRLRGVLV…EDAQLLYGFI (64 aa). The tract at residues 65–143 is domain II; the sequence is TKQERALFRL…SLMEASAGSE (79 aa). A flexible linker region spans residues 144-156; the sequence is REFVLQSNYSPAP. Residues 157–205 are domain III; that stretch reads TVNSAEEDAISALISLGYKPPQASKSVSAAYKEGMDSETLIKAALKSML.

It belongs to the RuvA family. As to quaternary structure, homotetramer. Forms an RuvA(8)-RuvB(12)-Holliday junction (HJ) complex. HJ DNA is sandwiched between 2 RuvA tetramers; dsDNA enters through RuvA and exits via RuvB. An RuvB hexamer assembles on each DNA strand where it exits the tetramer. Each RuvB hexamer is contacted by two RuvA subunits (via domain III) on 2 adjacent RuvB subunits; this complex drives branch migration. In the full resolvosome a probable DNA-RuvA(4)-RuvB(12)-RuvC(2) complex forms which resolves the HJ.

The protein localises to the cytoplasm. The RuvA-RuvB-RuvC complex processes Holliday junction (HJ) DNA during genetic recombination and DNA repair, while the RuvA-RuvB complex plays an important role in the rescue of blocked DNA replication forks via replication fork reversal (RFR). RuvA specifically binds to HJ cruciform DNA, conferring on it an open structure. The RuvB hexamer acts as an ATP-dependent pump, pulling dsDNA into and through the RuvAB complex. HJ branch migration allows RuvC to scan DNA until it finds its consensus sequence, where it cleaves and resolves the cruciform DNA. In Shewanella baltica (strain OS223), this protein is Holliday junction branch migration complex subunit RuvA.